We begin with the raw amino-acid sequence, 936 residues long: ATP-dependent RNA helicase dbp10 (936 aa).

Residues 1–48 (MPSRAASPALSENEFDITGALFQNDSDSDAETQKPTKRKKVPAAPNVN) are disordered. The Q motif signature appears at 91 to 119 (GGFQAMGLNANLLKAIARKGFSVPTPIQR). Residues 122–294 (IPVIMEDQDV…RAGLQDPTLV (173 aa)) form the Helicase ATP-binding domain. 135 to 142 (ARTGSGKT) lines the ATP pocket. The DEAD box signature appears at 242–245 (DEAD). Disordered stretches follow at residues 337–363 (TEASLRLKEKGPEDSKNKKRKRAEMER), 642–684 (EAKK…PDNM), 701–721 (TTDKASKSNSNSKSDSTPTTL), and 843–936 (TPGL…SRKK). Residues 341 to 352 (LRLKEKGPEDSK) are compositionally biased toward basic and acidic residues. Residues 360 to 511 (EMERAVNMKE…SDQVNFAEDV (152 aa)) form the Helicase C-terminal domain. Over residues 663 to 675 (AEVDGDAFSDLEG) the composition is skewed to acidic residues. Residues 701–717 (TTDKASKSNSNSKSDST) show a composition bias toward low complexity. Over residues 867 to 895 (EKAPKAADPLRGDYEKMKKKAEAARERAA) the composition is skewed to basic and acidic residues. The segment covering 896–906 (SKVGGVTSGGK) has biased composition (low complexity). Positions 907-916 (SEIRNTDDIR) are enriched in basic and acidic residues. Positions 917–936 (KARKLKQKRREKNARPSRKK) are enriched in basic residues.

This sequence belongs to the DEAD box helicase family. DDX54/DBP10 subfamily.

Its subcellular location is the nucleus. The protein localises to the nucleolus. The enzyme catalyses ATP + H2O = ADP + phosphate + H(+). Functionally, ATP-binding RNA helicase involved in the biogenesis of 60S ribosomal subunits and is required for the normal formation of 25S and 5.8S rRNAs. The protein is ATP-dependent RNA helicase dbp10 (dbp10) of Emericella nidulans (strain FGSC A4 / ATCC 38163 / CBS 112.46 / NRRL 194 / M139) (Aspergillus nidulans).